A 390-amino-acid polypeptide reads, in one-letter code: tRNA(Met) cytidine acetate ligase (390 aa).

ATP is bound by residues Val7 to His20, Gly101, Asn162, and Arg187.

It belongs to the TmcAL family.

It is found in the cytoplasm. The catalysed reaction is cytidine(34) in elongator tRNA(Met) + acetate + ATP = N(4)-acetylcytidine(34) in elongator tRNA(Met) + AMP + diphosphate. Its function is as follows. Catalyzes the formation of N(4)-acetylcytidine (ac(4)C) at the wobble position of elongator tRNA(Met), using acetate and ATP as substrates. First activates an acetate ion to form acetyladenylate (Ac-AMP) and then transfers the acetyl group to tRNA to form ac(4)C34. The protein is tRNA(Met) cytidine acetate ligase of Listeria monocytogenes serotype 4a (strain HCC23).